Consider the following 613-residue polypeptide: MAARDPSTASNYDAWKTKHTTANLRIDFDDKCLRGSVVLELESRTAKESKEIVLDSSYVSVESIKLNDVQTKWEIKERNGPMGSPLHISVPEGADSGEVVRLEMAVKTTPQCTALQWLTPAQTSNKKAPFMFSQAQACHARSLFPCQDTPDVKSTYSFNITSPHVVVASGVANDGDKAEADGGDKVYKYEQNVPIPSYLFALASGDIAMAPIGPRSSVATGPDEVKECQWELEEDMGKFMDAAERLVFPYKWGEYNVLVLPPSFPYGGMENPIYTFATPTIISGDRQNTDVIAHELSHSWSGNLVTSCSWEHYWLNEGWTMYLERRIIAAVRGPAYFDFSALLGWKHLEDAIEEFGADHKFTQLCINHKGIDPDDAFSTVPYEKGFHMVYYLDRLVGRKNFDKFIPYYFTKWANKSLDSYEFKDTFLEFFDKPEYADLKDKIAGIDWEGRFYTPGLPPKPEFDTSLVDVCYALADKWKKGDYTPSSKDVDGWTGNQKLVFLGSVQDFEQPLSAEQAKQLGNAYDLIETKNVELKTAYYLIALRAQDSTAYQGVADLLGQVGRMKFVRPLFRALNKVDRPLALTTFEKNKDFYHPICRAMAEKDLGLSDDAKKE.

Residues 134–136 (QAQ) and 265–270 (PYGGME) each bind a peptide. A Zn(2+)-binding site is contributed by histidine 294. The active-site Proton acceptor is glutamate 295. Zn(2+)-binding residues include histidine 298 and glutamate 317. Catalysis depends on tyrosine 382, which acts as the Proton donor.

The protein belongs to the peptidase M1 family. Zn(2+) is required as a cofactor.

It is found in the cytoplasm. It localises to the nucleus. The catalysed reaction is an epoxide + H2O = an ethanediol. Functionally, aminopeptidase that preferentially cleaves di- and tripeptides. Also has low epoxide hydrolase activity (in vitro). Can hydrolyze the epoxide leukotriene LTA(4) but it forms preferentially 5,6-dihydroxy-7,9,11,14-eicosatetraenoic acid rather than the cytokine leukotriene B(4) as the product compared to the homologous mammalian enzyme (in vitro). This Pyricularia oryzae (strain 70-15 / ATCC MYA-4617 / FGSC 8958) (Rice blast fungus) protein is Leucine aminopeptidase 2.